Here is a 136-residue protein sequence, read N- to C-terminus: ATP synthase epsilon chain (136 aa).

Residues 95-115 form a disordered region; that stretch reads DFSEAQSRLEEANKGSDRREQ. Residues 101-115 are compositionally biased toward basic and acidic residues; sequence SRLEEANKGSDRREQ.

It belongs to the ATPase epsilon chain family. As to quaternary structure, F-type ATPases have 2 components, CF(1) - the catalytic core - and CF(0) - the membrane proton channel. CF(1) has five subunits: alpha(3), beta(3), gamma(1), delta(1), epsilon(1). CF(0) has three main subunits: a, b and c.

The protein localises to the cellular thylakoid membrane. Its function is as follows. Produces ATP from ADP in the presence of a proton gradient across the membrane. The polypeptide is ATP synthase epsilon chain (Rippkaea orientalis (strain PCC 8801 / RF-1) (Cyanothece sp. (strain PCC 8801))).